The chain runs to 72 residues: Small ribosomal subunit protein bS18c (72 aa).

It belongs to the bacterial ribosomal protein bS18 family. In terms of assembly, part of the 30S ribosomal subunit.

Its subcellular location is the plastid. The protein resides in the chloroplast. This Emiliania huxleyi (Coccolithophore) protein is Small ribosomal subunit protein bS18c.